Consider the following 86-residue polypeptide: Small ribosomal subunit protein bS16 (86 aa).

It belongs to the bacterial ribosomal protein bS16 family.

The polypeptide is Small ribosomal subunit protein bS16 (Hamiltonella defensa subsp. Acyrthosiphon pisum (strain 5AT)).